We begin with the raw amino-acid sequence, 139 residues long: Transcription factor E (139 aa).

The HTH TFE/IIEalpha-type domain maps to 7 to 91 (IINKKQDEVS…DYEKILDTLL (85 aa)).

Belongs to the TFE family. Monomer. Interaction with RNA polymerase subunits RpoF and RpoE is necessary for Tfe stimulatory transcription activity. Able to interact with Tbp and RNA polymerase in the absence of DNA promoter. Interacts both with the preinitiation and elongation complexes.

Transcription factor that plays a role in the activation of archaeal genes transcribed by RNA polymerase. Facilitates transcription initiation by enhancing TATA-box recognition by TATA-box-binding protein (Tbp), and transcription factor B (Tfb) and RNA polymerase recruitment. Not absolutely required for transcription in vitro, but particularly important in cases where Tbp or Tfb function is not optimal. It dynamically alters the nucleic acid-binding properties of RNA polymerases by stabilizing the initiation complex and destabilizing elongation complexes. Seems to translocate with the RNA polymerase following initiation and acts by binding to the non template strand of the transcription bubble in elongation complexes. The chain is Transcription factor E from Nanoarchaeum equitans (strain Kin4-M).